The sequence spans 356 residues: tRNA N6-adenosine threonylcarbamoyltransferase (356 aa).

Fe cation is bound by residues H115 and H119. Residues 138 to 142 (LVSGG), D171, G184, and N283 contribute to the substrate site. D311 serves as a coordination point for Fe cation.

This sequence belongs to the KAE1 / TsaD family. Fe(2+) is required as a cofactor.

It localises to the cytoplasm. It catalyses the reaction L-threonylcarbamoyladenylate + adenosine(37) in tRNA = N(6)-L-threonylcarbamoyladenosine(37) in tRNA + AMP + H(+). In terms of biological role, required for the formation of a threonylcarbamoyl group on adenosine at position 37 (t(6)A37) in tRNAs that read codons beginning with adenine. Is involved in the transfer of the threonylcarbamoyl moiety of threonylcarbamoyl-AMP (TC-AMP) to the N6 group of A37, together with TsaE and TsaB. TsaD likely plays a direct catalytic role in this reaction. The sequence is that of tRNA N6-adenosine threonylcarbamoyltransferase from Prochlorococcus marinus (strain AS9601).